The chain runs to 251 residues: Triosephosphate isomerase (251 aa).

9–11 (NWK) contributes to the substrate binding site. H96 functions as the Electrophile in the catalytic mechanism. E167 acts as the Proton acceptor in catalysis. Substrate contacts are provided by residues G173, S213, and 234 to 235 (GG).

It belongs to the triosephosphate isomerase family. In terms of assembly, homodimer.

The protein localises to the cytoplasm. It catalyses the reaction D-glyceraldehyde 3-phosphate = dihydroxyacetone phosphate. The protein operates within carbohydrate biosynthesis; gluconeogenesis. It functions in the pathway carbohydrate degradation; glycolysis; D-glyceraldehyde 3-phosphate from glycerone phosphate: step 1/1. In terms of biological role, involved in the gluconeogenesis. Catalyzes stereospecifically the conversion of dihydroxyacetone phosphate (DHAP) to D-glyceraldehyde-3-phosphate (G3P). This Bacteroides fragilis (strain ATCC 25285 / DSM 2151 / CCUG 4856 / JCM 11019 / LMG 10263 / NCTC 9343 / Onslow / VPI 2553 / EN-2) protein is Triosephosphate isomerase.